The sequence spans 784 residues: MPHTLWMVWVLGVIISLSKEESSNQASLSCDHNGICKGSSGSLNSIPSVLTEAVKCLDLSNNRITYISNSDLQRYVNLQALVLTSNGINTIEEDSFSSLGRLEHLDLSYNYLSNLSSSWFKPLSSLKFLNLLGNPYKTLGETSLFSHLTKLRILRVGNMDTFTKIQRKDFAGLTFLEELEIDASDLQSYEPKSLKSIQNVSHLILHMKQHILLLEIFVDLTSSVECLELRDTDLNTFHFSELSTGETNSLIKKFTFRNVKITDESLFQVMKLLSQISGLLELEFDDCTLNGVGDFRGSDNDRVIDPGKVETLTIRRLHIPQFYSFNDLSTLYPLTERVKRITVENSKVFLVPCLLSRHLKSLEYLDLSENLMVEEYLKNSACEDAWPSLQTLILRQNHLASLGKIGETLLTLKNLTNLDISKNTFHYMPETCQWPEKMKYLNLSSTRIHSVTGCIPKTLEILDISNNNLNLFSLNLPQLKELYISRNKLMTLPDASLLPMLLVLKISRNTITTFSKEQLDSFHTLKTLEAGGNNFICSCEFLSFTQEQQALAKVLVDWPANYLCDSPSHVRGQRVQDVRLSVSECHRAALVSGMCCALFLLILLMGVLCHRFHGLWYMKMMWAWLQAKRKPRKAPNRDICYDAFVSYSERDAYWVENLMVQELENFNPPFKLCLHKRDFIPGKWIIDNIIDSIEKSHKTVFVLSENFVKSEWCKYELDFSHFRLFDENNDAAILVLLEPIEKKAIPQRFCKLRKIMNTKTYLEWPMDEARQEGFWVNLRAAIKS.

The first 20 residues, 1-20, serve as a signal peptide directing secretion; that stretch reads MPHTLWMVWVLGVIISLSKE. Residues 21-587 lie on the Extracellular side of the membrane; the sequence is ESSNQASLSC…VRLSVSECHR (567 aa). Cys30 and Cys36 are joined by a disulfide. LRR repeat units follow at residues 54–77, 78–101, 102–125, 126–150, 151–175, 176–199, 200–223, 224–250, 251–278, 279–308, 309–337, 338–361, 362–388, 389–414, 415–437, 438–457, 458–478, 479–500, and 501–524; these read VKCL…RYVN, LQAL…SLGR, LEHL…PLSS, LKFL…HLTK, LRIL…GLTF, LEEL…SIQN, VSHL…LTSS, VECL…TNSL, IKKF…QISG, LLEL…DPGK, VETL…LTER, VKRI…HLKS, LEYL…AWPS, LQTL…TLKN, LTNL…WPEK, MKYL…CIPK, TLEI…NLPQ, LKEL…LLPM, and LLVL…SFHT. An N-linked (GlcNAc...) asparagine glycan is attached at Asn114. The N-linked (GlcNAc...) asparagine glycan is linked to Asn199. Cys353 and Cys382 are disulfide-bonded. The N-linked (GlcNAc...) asparagine glycan is linked to Asn414. A disulfide bridge links Cys432 with Cys454. Residue Asn442 is glycosylated (N-linked (GlcNAc...) asparagine). An LRRCT domain is found at 525–579; sequence LKTLEAGGNNFICSCEFLSFTQEQQALAKVLVDWPANYLCDSPSHVRGQRVQDVR. The helical transmembrane segment at 588–608 threads the bilayer; that stretch reads AALVSGMCCALFLLILLMGVL. At 609-784 the chain is on the cytoplasmic side; that stretch reads CHRFHGLWYM…WVNLRAAIKS (176 aa). In terms of domain architecture, TIR spans 639–782; the sequence is ICYDAFVSYS…GFWVNLRAAI (144 aa). Lys754 is covalently cross-linked (Glycyl lysine isopeptide (Lys-Gly) (interchain with G-Cter in ubiquitin)). The ATG16L1-binding motif motif lies at 761 to 778; that stretch reads YLEWPMDEARQEGFWVNL.

It belongs to the Toll-like receptor family. Interacts with LY96, TLR1 and TLR6 (via extracellular domain). TLR2 seems to exist in heterodimers with either TLR1 or TLR6 before stimulation by the ligand. The heterodimers form bigger oligomers in response to their corresponding ligands as well as further heterotypic associations with other receptors such as CD14 and/or CD36. Binds MYD88 (via TIR domain). Interacts with TICAM1. Interacts with CNPY3. Interacts with ATG16L1. Interacts with PPP1R11. Interacts with TICAM2. Interacts with TIRAP. Post-translationally, ubiquitinated at Lys-754 by PPP1R11, leading to its degradation. Deubiquitinated by USP2. Glycosylation of Asn-442 is critical for secretion of the N-terminal ectodomain of TLR2.

The protein localises to the membrane. It localises to the cytoplasmic vesicle. It is found in the phagosome membrane. Its subcellular location is the membrane raft. Functionally, cooperates with LY96 to mediate the innate immune response to bacterial lipoproteins and other microbial cell wall components. Cooperates with TLR1 or TLR6 to mediate the innate immune response to bacterial lipoproteins or lipopeptides. Acts via MYD88 and TRAF6, leading to NF-kappa-B activation, cytokine secretion and the inflammatory response. May also promote apoptosis in response to lipoproteins. Forms activation clusters composed of several receptors depending on the ligand, these clusters trigger signaling from the cell surface and subsequently are targeted to the Golgi in a lipid-raft dependent pathway. Forms the cluster TLR2:TLR6:CD14:CD36 in response to diacylated lipopeptides and TLR2:TLR1:CD14 in response to triacylated lipopeptides. This is Toll-like receptor 2 (TLR2) from Macaca mulatta (Rhesus macaque).